We begin with the raw amino-acid sequence, 91 residues long: Large ribosomal subunit protein uL23 (91 aa).

This sequence belongs to the universal ribosomal protein uL23 family. Part of the 50S ribosomal subunit. Contacts protein L29, and trigger factor when it is bound to the ribosome.

Its function is as follows. One of the early assembly proteins it binds 23S rRNA. One of the proteins that surrounds the polypeptide exit tunnel on the outside of the ribosome. Forms the main docking site for trigger factor binding to the ribosome. This Macrococcus caseolyticus (strain JCSC5402) (Macrococcoides caseolyticum) protein is Large ribosomal subunit protein uL23.